We begin with the raw amino-acid sequence, 847 residues long: Nitrite reductase (NADH) large subunit (847 aa).

Residue 44 to 79 participates in FAD binding; sequence YDRVHLSSYFSHHTAEELSLVREGFYEKHGIKVLVG. 193 to 225 contacts NAD(+); that stretch reads LRRKIESMGVRVHTSKNTLEIVQEGVEARKTMR. The [2Fe-2S] cluster site is built by C425, C427, C459, and C462. Positions 641, 647, 681, and 685 each coordinate [4Fe-4S] cluster. C685 lines the siroheme pocket.

This sequence belongs to the nitrite and sulfite reductase 4Fe-4S domain family. In terms of assembly, homodimer which associates with NirD. The cofactor is siroheme. It depends on [2Fe-2S] cluster as a cofactor. Requires [4Fe-4S] cluster as cofactor. FAD is required as a cofactor.

It catalyses the reaction NH4(+) + 3 NAD(+) + 2 H2O = nitrite + 3 NADH + 5 H(+). It functions in the pathway nitrogen metabolism; nitrate reduction (assimilation). The polypeptide is Nitrite reductase (NADH) large subunit (nirB) (Escherichia coli (strain K12)).